Here is a 630-residue protein sequence, read N- to C-terminus: Probable potassium transport system protein Kup 1 (630 aa).

Transmembrane regions (helical) follow at residues 15–35, 58–78, 104–124, 142–162, 173–193, 208–228, 252–272, 290–310, 342–362, 368–388, 399–419, and 424–444; these read LLAM…TSPL, LISL…VLFL, TAIL…DAMI, PALS…LFAV, FFGP…FMHI, AVAF…AVFL, WFTV…AFVL, ALLP…QAVI, IYLP…VFIF, LATA…VLAF, AWWA…FLGA, and IHDG…IMWT.

It belongs to the HAK/KUP transporter (TC 2.A.72) family.

Its subcellular location is the cell inner membrane. The catalysed reaction is K(+)(in) + H(+)(in) = K(+)(out) + H(+)(out). Transport of potassium into the cell. Likely operates as a K(+):H(+) symporter. The sequence is that of Probable potassium transport system protein Kup 1 from Sinorhizobium medicae (strain WSM419) (Ensifer medicae).